Consider the following 252-residue polypeptide: 3-dehydroquinate dehydratase (252 aa).

Residues S21, 46–48 (EWR), and R82 each bind 3-dehydroquinate. Residue H143 is the Proton donor/acceptor of the active site. The active-site Schiff-base intermediate with substrate is the K170. Positions 213, 232, and 236 each coordinate 3-dehydroquinate.

Belongs to the type-I 3-dehydroquinase family. As to quaternary structure, homodimer.

The catalysed reaction is 3-dehydroquinate = 3-dehydroshikimate + H2O. The protein operates within metabolic intermediate biosynthesis; chorismate biosynthesis; chorismate from D-erythrose 4-phosphate and phosphoenolpyruvate: step 3/7. Its function is as follows. Involved in the third step of the chorismate pathway, which leads to the biosynthesis of aromatic amino acids. Catalyzes the cis-dehydration of 3-dehydroquinate (DHQ) and introduces the first double bond of the aromatic ring to yield 3-dehydroshikimate. The polypeptide is 3-dehydroquinate dehydratase (Escherichia coli O139:H28 (strain E24377A / ETEC)).